A 447-amino-acid polypeptide reads, in one-letter code: MVSCENLWQQALAILATQLTKPAFDTWIKASVLISLGDGVATIQVENGFVLNHLQKSYGPLLMEVLTDLTGQEITVKLITDGLEPHSLIGQESSLPMETTPKNATALNGKYTFSRFVVGPTNRMAHAASLAVAESPGREFNPLFLCGGVGLGKTHLMQAIAHYRLEMYPNAKVYYVSTERFTNDLITAIRQDNMEDFRSYYRSADFLLIDDIQFIKGKEYTQEEFFHTFNSLHEAGKQVVVASDRAPQRIPGLQDRLISRFSMGLIADIQVPDLETRMAILQKKAEYDRIRLPKEVIEYIASHYTSNIRELEGALIRAIAYTSLSNVAMTVENIAPVLNPPVEKVAAAPETIITIVAQHYQLKVEELLSNSRRREVSLARQVGMYLMRQHTDLSLPRIGEAFGGKDHTTVMYSCDKITQLQQKDWETSQTLTSLSHRINIAGQAPES.

The segment at 1 to 79 is domain I, interacts with DnaA modulators; that stretch reads MVSCENLWQQ…TGQEITVKLI (79 aa). The domain II stretch occupies residues 79–105; that stretch reads ITDGLEPHSLIGQESSLPMETTPKNAT. The interval 106–322 is domain III, AAA+ region; it reads ALNGKYTFSR…GALIRAIAYT (217 aa). ATP is bound by residues Gly-150, Gly-152, Lys-153, and Thr-154. The segment at 323–447 is domain IV, binds dsDNA; it reads SLSNVAMTVE…INIAGQAPES (125 aa).

This sequence belongs to the DnaA family. As to quaternary structure, oligomerizes as a right-handed, spiral filament on DNA at oriC.

It is found in the cytoplasm. Functionally, plays an essential role in the initiation and regulation of chromosomal replication. ATP-DnaA binds to the origin of replication (oriC) to initiate formation of the DNA replication initiation complex once per cell cycle. Binds the DnaA box (a 9 base pair repeat at the origin) and separates the double-stranded (ds)DNA. Forms a right-handed helical filament on oriC DNA; dsDNA binds to the exterior of the filament while single-stranded (ss)DNA is stabiized in the filament's interior. The ATP-DnaA-oriC complex binds and stabilizes one strand of the AT-rich DNA unwinding element (DUE), permitting loading of DNA polymerase. After initiation quickly degrades to an ADP-DnaA complex that is not apt for DNA replication. Binds acidic phospholipids. Its function is as follows. Isolated domain IV (residues 348-447) binds both E.coli and B.subtilis oriC. This Synechocystis sp. (strain ATCC 27184 / PCC 6803 / Kazusa) protein is Chromosomal replication initiator protein DnaA.